The following is a 440-amino-acid chain: Adenylosuccinate synthetase (440 aa).

GTP-binding positions include 12–18 (GDEGKGK) and 40–42 (GHT). The active-site Proton acceptor is aspartate 13. Mg(2+)-binding residues include aspartate 13 and glycine 40. Residues 13–16 (DEGK), 38–41 (NAGH), threonine 128, arginine 142, glutamine 223, threonine 238, and arginine 302 each bind IMP. The active-site Proton donor is histidine 41. Residue 298–304 (TTTGRPR) coordinates substrate. Residues arginine 304, 330–332 (KLD), and 412–414 (SVG) contribute to the GTP site.

It belongs to the adenylosuccinate synthetase family. As to quaternary structure, homodimer. Mg(2+) serves as cofactor.

The protein resides in the cytoplasm. The enzyme catalyses IMP + L-aspartate + GTP = N(6)-(1,2-dicarboxyethyl)-AMP + GDP + phosphate + 2 H(+). The protein operates within purine metabolism; AMP biosynthesis via de novo pathway; AMP from IMP: step 1/2. Functionally, plays an important role in the de novo pathway of purine nucleotide biosynthesis. Catalyzes the first committed step in the biosynthesis of AMP from IMP. This is Adenylosuccinate synthetase from Gloeobacter violaceus (strain ATCC 29082 / PCC 7421).